A 90-amino-acid chain; its full sequence is Small ribosomal subunit protein uS15c (90 aa).

Belongs to the universal ribosomal protein uS15 family. Part of the 30S ribosomal subunit.

The protein localises to the plastid. In Cuscuta reflexa (Southern Asian dodder), this protein is Small ribosomal subunit protein uS15c (rps15).